The primary structure comprises 380 residues: Chaperone protein DnaJ (380 aa).

In terms of domain architecture, J spans 5–70; that stretch reads DFYEVLGVSK…NLRARYDQYG (66 aa). Residues 135–213 form a CR-type zinc finger; that stretch reads GVSKEIKVPS…CHGEGRYQKT (79 aa). Zn(2+) is bound by residues Cys148, Cys151, Cys165, Cys168, Cys187, Cys190, Cys201, and Cys204. CXXCXGXG motif repeat units follow at residues 148-155, 165-172, 187-194, and 201-208; these read CEVCNGSG, CPTCHGAG, CPHCHGRG, and CRKCHGEG.

It belongs to the DnaJ family. Homodimer. The cofactor is Zn(2+).

It is found in the cytoplasm. In terms of biological role, participates actively in the response to hyperosmotic and heat shock by preventing the aggregation of stress-denatured proteins and by disaggregating proteins, also in an autonomous, DnaK-independent fashion. Unfolded proteins bind initially to DnaJ; upon interaction with the DnaJ-bound protein, DnaK hydrolyzes its bound ATP, resulting in the formation of a stable complex. GrpE releases ADP from DnaK; ATP binding to DnaK triggers the release of the substrate protein, thus completing the reaction cycle. Several rounds of ATP-dependent interactions between DnaJ, DnaK and GrpE are required for fully efficient folding. Also involved, together with DnaK and GrpE, in the DNA replication of plasmids through activation of initiation proteins. The sequence is that of Chaperone protein DnaJ from Aeromonas salmonicida (strain A449).